The following is a 705-amino-acid chain: Dynein axonemal intermediate chain 1 (705 aa).

Disordered regions lie at residues 1–44 (MPSK…AVRP) and 122–169 (AGSQ…DVPA). Phosphoserine occurs at positions 124 and 127. Residues 124–135 (SQESVKVVTSDT) are compositionally biased toward polar residues. Residues 136-159 (EILEEEEEPKEGEGEGEGEAEGEA) show a composition bias toward acidic residues. WD repeat units lie at residues 386–426 (SSES…SQPC), 435–478 (KHTD…LVHI), 543–583 (AHNM…PMFI), 585–625 (DLNA…YEAI), and 633–672 (KKKN…RKMP).

Belongs to the dynein intermediate chain family. As to quaternary structure, consists of at least two heavy chains and a number of intermediate and light chains. Interacts with BICD2. Interacts with CFAP45 and CFAP52. Interacts with CFAP53.

Its subcellular location is the cytoplasm. It is found in the cytoskeleton. The protein localises to the cilium axoneme. Its function is as follows. Part of the dynein complex of respiratory cilia. This is Dynein axonemal intermediate chain 1 (Dnai1) from Rattus norvegicus (Rat).